The primary structure comprises 194 residues: Yellow fluorescent protein (194 aa).

2 Lumazine-binding repeats span residues 1-98 and 99-194; these read MFKG…SGGH and ILSA…NQCW. 179 to 183 contributes to the FMN binding site; sequence KVNVE.

As to quaternary structure, homodimer. It depends on FMN as a cofactor.

Antenna protein that modulates the color of the bioluminescence emission of the luciferase. In the presence of YFP and only at temperatures below 20 degrees Celsius, luciferase exhibits a bimodal emission spectrum with a new peak at 545 nM (yellow), in addition to the one at 485 nM. The chain is Yellow fluorescent protein (luxY) from Aliivibrio fischeri (Vibrio fischeri).